The chain runs to 1405 residues: DNA-directed RNA polymerase subunit beta' (1405 aa).

The Zn(2+) site is built by C71, C73, C86, and C89. Mg(2+)-binding residues include D462, D464, and D466. Zn(2+) is bound by residues C810, C884, C891, and C894.

The protein belongs to the RNA polymerase beta' chain family. As to quaternary structure, the RNAP catalytic core consists of 2 alpha, 1 beta, 1 beta' and 1 omega subunit. When a sigma factor is associated with the core the holoenzyme is formed, which can initiate transcription. Mg(2+) is required as a cofactor. Zn(2+) serves as cofactor.

It carries out the reaction RNA(n) + a ribonucleoside 5'-triphosphate = RNA(n+1) + diphosphate. Functionally, DNA-dependent RNA polymerase catalyzes the transcription of DNA into RNA using the four ribonucleoside triphosphates as substrates. The sequence is that of DNA-directed RNA polymerase subunit beta' from Maricaulis maris (strain MCS10) (Caulobacter maris).